A 225-amino-acid polypeptide reads, in one-letter code: Putative tyrosine-protein phosphatase OCA1 (225 aa).

The segment covering 1-11 (MTDNCREDDDN) has biased composition (acidic residues). Residues 1-24 (MTDNCREDDDNLGTSGDNALSAPT) are disordered. Polar residues predominate over residues 12-24 (LGTSGDNALSAPT). The Tyrosine-protein phosphatase domain occupies 42 to 196 (NFCPVERYLY…FDTKSVTIDK (155 aa)). Cys-138 (phosphocysteine intermediate) is an active-site residue.

This sequence belongs to the protein-tyrosine phosphatase family.

It localises to the cytoplasm. It carries out the reaction O-phospho-L-tyrosyl-[protein] + H2O = L-tyrosyl-[protein] + phosphate. In terms of biological role, putative tyrosine-protein phosphatase required for protection against superoxide stress. The chain is Putative tyrosine-protein phosphatase OCA1 (OCA1) from Eremothecium gossypii (strain ATCC 10895 / CBS 109.51 / FGSC 9923 / NRRL Y-1056) (Yeast).